A 212-amino-acid chain; its full sequence is Orotate phosphoribosyltransferase (212 aa).

Lys26 is a 5-phospho-alpha-D-ribose 1-diphosphate binding site. 34–35 (FF) lines the orotate pocket. Residues 72-73 (YK), Arg99, Lys100, Lys103, His105, and 124-132 (DDVITVGTA) contribute to the 5-phospho-alpha-D-ribose 1-diphosphate site. Residues Thr128 and Arg156 each coordinate orotate.

This sequence belongs to the purine/pyrimidine phosphoribosyltransferase family. PyrE subfamily. Homodimer. Requires Mg(2+) as cofactor.

It carries out the reaction orotidine 5'-phosphate + diphosphate = orotate + 5-phospho-alpha-D-ribose 1-diphosphate. It functions in the pathway pyrimidine metabolism; UMP biosynthesis via de novo pathway; UMP from orotate: step 1/2. Its function is as follows. Catalyzes the transfer of a ribosyl phosphate group from 5-phosphoribose 1-diphosphate to orotate, leading to the formation of orotidine monophosphate (OMP). The protein is Orotate phosphoribosyltransferase of Ruthia magnifica subsp. Calyptogena magnifica.